A 102-amino-acid polypeptide reads, in one-letter code: Putative pterin-4-alpha-carbinolamine dehydratase (102 aa).

This sequence belongs to the pterin-4-alpha-carbinolamine dehydratase family.

The enzyme catalyses (4aS,6R)-4a-hydroxy-L-erythro-5,6,7,8-tetrahydrobiopterin = (6R)-L-erythro-6,7-dihydrobiopterin + H2O. The polypeptide is Putative pterin-4-alpha-carbinolamine dehydratase (Burkholderia lata (strain ATCC 17760 / DSM 23089 / LMG 22485 / NCIMB 9086 / R18194 / 383)).